Consider the following 904-residue polypeptide: Translation initiation factor IF-2 (904 aa).

3 disordered regions span residues 102–122 (TYVKSENEGGGRAAPMTPDEE), 134–252 (RQRN…MVAG), and 267–316 (HLSA…ERPT). Residues 134-177 (RQRNLEEQQRLAESDRVRDEAIQRKREEEQAAKDRAEAERKAAE) are compositionally biased toward basic and acidic residues. Residues 178-230 (EAAAAASAPAPVADAPKPSAAAPAARLPSSPSSAPRAARPAGASPASRPAAPA) are compositionally biased toward low complexity. A tr-type G domain is found at 403-572 (SRPPVVTIMG…SLQAEVLELK (170 aa)). Residues 412 to 419 (GHVDHGKT) form a G1 region. 412–419 (GHVDHGKT) contributes to the GTP binding site. Residues 437–441 (GITQH) are G2. The tract at residues 458 to 461 (DTPG) is G3. GTP contacts are provided by residues 458–462 (DTPGH) and 512–515 (NKID). The interval 512-515 (NKID) is G4. The tract at residues 548–550 (SAK) is G5.

Belongs to the TRAFAC class translation factor GTPase superfamily. Classic translation factor GTPase family. IF-2 subfamily.

Its subcellular location is the cytoplasm. Functionally, one of the essential components for the initiation of protein synthesis. Protects formylmethionyl-tRNA from spontaneous hydrolysis and promotes its binding to the 30S ribosomal subunits. Also involved in the hydrolysis of GTP during the formation of the 70S ribosomal complex. This Xanthomonas axonopodis pv. citri (strain 306) protein is Translation initiation factor IF-2.